The chain runs to 96 residues: UPF0235 protein YggU (96 aa).

The protein belongs to the UPF0235 family.

This is UPF0235 protein YggU from Escherichia coli O127:H6 (strain E2348/69 / EPEC).